The primary structure comprises 238 residues: MEGSKSEAVFDSMNLNPQIFINEAINSVEDYVDQAFDFYARDASKSLKIKGSDKQKSQALSNGIARVRGLLLSVIDNRLKLWESYSLRFCFAVPDGFVLPKSEESSSVHQDGLYDLELDAELDSLRDKLNVVGKRSVELDSELQALERSSVSRERSLRLVNEALELYDESSMDEIFKEMTKMASELRASVERLKTRRMKASESAKVKRLKNHGKEFSAMTFDGKLEDLEKFQAELRKM.

A coiled-coil region spans residues glutamate 117–serine 149.

Belongs to the mis12 family.

It is found in the chromosome. Its subcellular location is the centromere. The protein localises to the kinetochore. Constitutive component of kinetochores that is essential for proper cell division during mitotic cell cycle. May play a role in the modulation of centromere during meiosis. This Arabidopsis thaliana (Mouse-ear cress) protein is Protein MIS12 homolog.